Reading from the N-terminus, the 210-residue chain is Dephospho-CoA kinase (210 aa).

The region spanning Trp-4–Lys-202 is the DPCK domain. An ATP-binding site is contributed by Gly-12 to Ala-17.

This sequence belongs to the CoaE family.

It is found in the cytoplasm. The catalysed reaction is 3'-dephospho-CoA + ATP = ADP + CoA + H(+). Its pathway is cofactor biosynthesis; coenzyme A biosynthesis; CoA from (R)-pantothenate: step 5/5. Its function is as follows. Catalyzes the phosphorylation of the 3'-hydroxyl group of dephosphocoenzyme A to form coenzyme A. The protein is Dephospho-CoA kinase of Neisseria gonorrhoeae.